The chain runs to 345 residues: tRNA dimethylallyltransferase (345 aa).

Residue 9 to 16 (GPTASGKS) coordinates ATP. 11-16 (TASGKS) lines the substrate pocket. Interaction with substrate tRNA stretches follow at residues 34–37 (DSMQ) and 195–199 (QRMIR).

Belongs to the IPP transferase family. Monomer. Mg(2+) is required as a cofactor.

The catalysed reaction is adenosine(37) in tRNA + dimethylallyl diphosphate = N(6)-dimethylallyladenosine(37) in tRNA + diphosphate. In terms of biological role, catalyzes the transfer of a dimethylallyl group onto the adenine at position 37 in tRNAs that read codons beginning with uridine, leading to the formation of N6-(dimethylallyl)adenosine (i(6)A). This is tRNA dimethylallyltransferase from Orientia tsutsugamushi (strain Boryong) (Rickettsia tsutsugamushi).